The chain runs to 179 residues: Large ribosomal subunit protein uL10 (179 aa).

It belongs to the universal ribosomal protein uL10 family. As to quaternary structure, part of the ribosomal stalk of the 50S ribosomal subunit. The N-terminus interacts with L11 and the large rRNA to form the base of the stalk. The C-terminus forms an elongated spine to which L12 dimers bind in a sequential fashion forming a multimeric L10(L12)X complex.

Functionally, forms part of the ribosomal stalk, playing a central role in the interaction of the ribosome with GTP-bound translation factors. The chain is Large ribosomal subunit protein uL10 from Thermotoga petrophila (strain ATCC BAA-488 / DSM 13995 / JCM 10881 / RKU-1).